The sequence spans 75 residues: Antimicrobial peptide Meucin-49-1 (75 aa).

The first 22 residues, 1–22 (MNKKILLVIFIVTMLIVDEVNS), serve as a signal peptide directing secretion.

This sequence belongs to the non-disulfide-bridged peptide (NDBP) superfamily. Long chain multifunctional peptide (group 2) family. In terms of tissue distribution, expressed by the venom gland.

The protein localises to the secreted. Its function is as follows. Antimicrobial peptide. The sequence is that of Antimicrobial peptide Meucin-49-1 from Mesobuthus eupeus (Lesser Asian scorpion).